A 1094-amino-acid chain; its full sequence is Isoleucine--tRNA ligase (1094 aa).

The short motif at 53 to 63 is the 'HIGH' region element; that stretch reads PFANGLPHYGH. The short motif at 624–628 is the 'KMSKS' region element; that stretch reads KLSKR. Position 627 (Lys627) interacts with ATP.

This sequence belongs to the class-I aminoacyl-tRNA synthetase family. IleS type 2 subfamily. As to quaternary structure, monomer. Zn(2+) serves as cofactor.

The protein localises to the cytoplasm. The catalysed reaction is tRNA(Ile) + L-isoleucine + ATP = L-isoleucyl-tRNA(Ile) + AMP + diphosphate. Functionally, catalyzes the attachment of isoleucine to tRNA(Ile). As IleRS can inadvertently accommodate and process structurally similar amino acids such as valine, to avoid such errors it has two additional distinct tRNA(Ile)-dependent editing activities. One activity is designated as 'pretransfer' editing and involves the hydrolysis of activated Val-AMP. The other activity is designated 'posttransfer' editing and involves deacylation of mischarged Val-tRNA(Ile). The protein is Isoleucine--tRNA ligase of Rickettsia felis (strain ATCC VR-1525 / URRWXCal2) (Rickettsia azadi).